The sequence spans 96 residues: Colicin-K immunity protein (96 aa).

A helical membrane pass occupies residues 73–93 (ALFYLLMAIPVGLPSFIYYTL).

It is found in the cell membrane. This protein is able to protect a cell, which harbors the plasmid ColK encoding colicin K, against colicin K. In Escherichia coli, this protein is Colicin-K immunity protein (cki).